Reading from the N-terminus, the 223-residue chain is Virulence transcriptional regulatory protein PhoP (223 aa).

The Response regulatory domain occupies 2–116 (RVLVVEDNAL…EVMARMQALM (115 aa)). Aspartate 51 bears the 4-aspartylphosphate mark. The ompR/PhoB-type DNA-binding region spans 124–222 (SQVISLPPFQ…VRGQGYLFEL (99 aa)).

Post-translationally, phosphorylated by PhoQ.

It localises to the cytoplasm. Functionally, member of the two-component regulatory system PhoQ/PhoP involved in virulence and adaptation to low Mg(2+) environments. Necessary for resistance to killing by polymorphonuclear leukocytes (PMNs) and cationic antimicrobial peptides (CAMP) they produce. This chain is Virulence transcriptional regulatory protein PhoP (phoP), found in Shigella flexneri.